Consider the following 125-residue polypeptide: NADH dehydrogenase [ubiquinone] 1 beta subcomplex subunit 8, mitochondrial (125 aa).

The N-terminal 29 residues, 1–29 (MAGRLSGVASRIMGGNGVVARSVGSSLRQ), are a transit peptide targeting the mitochondrion. The chain crosses the membrane as a helical span at residues 78 to 98 (ALAWLSGGLGFFVGLGLLAVL).

Belongs to the complex I NDUFB8 subunit family. In terms of assembly, complex I is composed of at least 49 different subunits.

It localises to the mitochondrion inner membrane. Accessory subunit of the mitochondrial membrane respiratory chain NADH dehydrogenase (Complex I), that is believed not to be involved in catalysis. Complex I functions in the transfer of electrons from NADH to the respiratory chain. The immediate electron acceptor for the enzyme is believed to be ubiquinone. This is NADH dehydrogenase [ubiquinone] 1 beta subcomplex subunit 8, mitochondrial from Arabidopsis thaliana (Mouse-ear cress).